Here is a 303-residue protein sequence, read N- to C-terminus: 4-diphosphocytidyl-2-C-methyl-D-erythritol kinase (303 aa).

Lysine 18 is a catalytic residue. Proline 111 to alanine 121 provides a ligand contact to ATP. Aspartate 153 is a catalytic residue.

Belongs to the GHMP kinase family. IspE subfamily.

It catalyses the reaction 4-CDP-2-C-methyl-D-erythritol + ATP = 4-CDP-2-C-methyl-D-erythritol 2-phosphate + ADP + H(+). It participates in isoprenoid biosynthesis; isopentenyl diphosphate biosynthesis via DXP pathway; isopentenyl diphosphate from 1-deoxy-D-xylulose 5-phosphate: step 3/6. Catalyzes the phosphorylation of the position 2 hydroxy group of 4-diphosphocytidyl-2C-methyl-D-erythritol. This is 4-diphosphocytidyl-2-C-methyl-D-erythritol kinase from Sinorhizobium medicae (strain WSM419) (Ensifer medicae).